The primary structure comprises 193 residues: FMN-dependent NADH:quinone oxidoreductase (193 aa).

Residues S9, 15 to 17, and 137 to 140 contribute to the FMN site; these read SSS and TSGG.

It belongs to the azoreductase type 1 family. In terms of assembly, homodimer. The cofactor is FMN.

It carries out the reaction 2 a quinone + NADH + H(+) = 2 a 1,4-benzosemiquinone + NAD(+). The enzyme catalyses N,N-dimethyl-1,4-phenylenediamine + anthranilate + 2 NAD(+) = 2-(4-dimethylaminophenyl)diazenylbenzoate + 2 NADH + 2 H(+). Its function is as follows. Quinone reductase that provides resistance to thiol-specific stress caused by electrophilic quinones. Functionally, also exhibits azoreductase activity. Catalyzes the reductive cleavage of the azo bond in aromatic azo compounds to the corresponding amines. This chain is FMN-dependent NADH:quinone oxidoreductase, found in Pelagibacter ubique (strain HTCC1062).